The sequence spans 456 residues: MSNSSMSVVILAAGKGTRMYSDLPKVLHPLAGKPMVQHVIDAAMKLGAQQVHLVYGHGGELLQKTLTDPALNWVLQAEQLGTGHAMQQAAPHFADDEDVLMLYGDVPLISVDTLQRLLAAKPQGGIGLLTVKLDNPSGYGRIVRENGDVVGIVEHKDASDTQREINEINTGILVANGRDLKRWLSLLNNNNAQGEFYITDIIALAHADGKKIATVHPARLSEVEGVNNRLQLAALERVYQSEQAEKLLLAGVMLLDPARFDLRGELTHGRDITIDTNVIIEGHVTLGDRVRIGTGCVLKNCVIGDDSEISPYSVLEDSRLDAGCTVGPFARLRPGAELAEGAHVGNFVEIKKARLGKGSKAGHLSYLGDAEIGSGVNIGAGTITCNYDGANKFKTIIGDDVFVGSDTQLVAPVTVANGATIAAGTTVTRDIAENELVLSRVKQVHVQGWQRPIKKK.

A pyrophosphorylase region spans residues 1–229; that stretch reads MSNSSMSVVI…LSEVEGVNNR (229 aa). Residues 11 to 14, K25, Q76, 81 to 82, 103 to 105, G140, E154, N169, and N227 contribute to the UDP-N-acetyl-alpha-D-glucosamine site; these read LAAG, GT, and YGD. Position 105 (D105) interacts with Mg(2+). N227 is a binding site for Mg(2+). Residues 230 to 250 are linker; it reads LQLAALERVYQSEQAEKLLLA. Positions 251 to 456 are N-acetyltransferase; sequence GVMLLDPARF…QGWQRPIKKK (206 aa). The UDP-N-acetyl-alpha-D-glucosamine site is built by R333 and K351. Residue H363 is the Proton acceptor of the active site. 2 residues coordinate UDP-N-acetyl-alpha-D-glucosamine: Y366 and N377. Acetyl-CoA contacts are provided by residues A380, 386 to 387, S405, A423, and R440; that span reads NY.

This sequence in the N-terminal section; belongs to the N-acetylglucosamine-1-phosphate uridyltransferase family. The protein in the C-terminal section; belongs to the transferase hexapeptide repeat family. In terms of assembly, homotrimer. It depends on Mg(2+) as a cofactor.

The protein resides in the cytoplasm. The catalysed reaction is alpha-D-glucosamine 1-phosphate + acetyl-CoA = N-acetyl-alpha-D-glucosamine 1-phosphate + CoA + H(+). The enzyme catalyses N-acetyl-alpha-D-glucosamine 1-phosphate + UTP + H(+) = UDP-N-acetyl-alpha-D-glucosamine + diphosphate. Its pathway is nucleotide-sugar biosynthesis; UDP-N-acetyl-alpha-D-glucosamine biosynthesis; N-acetyl-alpha-D-glucosamine 1-phosphate from alpha-D-glucosamine 6-phosphate (route II): step 2/2. It functions in the pathway nucleotide-sugar biosynthesis; UDP-N-acetyl-alpha-D-glucosamine biosynthesis; UDP-N-acetyl-alpha-D-glucosamine from N-acetyl-alpha-D-glucosamine 1-phosphate: step 1/1. The protein operates within bacterial outer membrane biogenesis; LPS lipid A biosynthesis. Its function is as follows. Catalyzes the last two sequential reactions in the de novo biosynthetic pathway for UDP-N-acetylglucosamine (UDP-GlcNAc). The C-terminal domain catalyzes the transfer of acetyl group from acetyl coenzyme A to glucosamine-1-phosphate (GlcN-1-P) to produce N-acetylglucosamine-1-phosphate (GlcNAc-1-P), which is converted into UDP-GlcNAc by the transfer of uridine 5-monophosphate (from uridine 5-triphosphate), a reaction catalyzed by the N-terminal domain. This is Bifunctional protein GlmU from Yersinia enterocolitica serotype O:8 / biotype 1B (strain NCTC 13174 / 8081).